Reading from the N-terminus, the 222-residue chain is Pectate lyase A (222 aa).

The N-terminal stretch at 1–25 is a signal peptide; sequence MKKMLTLLLSAGLVASIFGVMPAAA.

The protein belongs to the polysaccharide lyase 3 family. The cofactor is Ca(2+).

It is found in the secreted. The catalysed reaction is Eliminative cleavage of (1-&gt;4)-alpha-D-galacturonan to give oligosaccharides with 4-deoxy-alpha-D-galact-4-enuronosyl groups at their non-reducing ends.. It catalyses the reaction Eliminative cleavage of (1-&gt;4)-alpha-D-galacturonan methyl ester to give oligosaccharides with 4-deoxy-6-O-methyl-alpha-D-galact-4-enuronosyl groups at their non-reducing ends.. It participates in glycan metabolism; pectin degradation; 2-dehydro-3-deoxy-D-gluconate from pectin: step 2/5. Strongly inhibited by Ba(2+). To a lesser extent, is also inhibited by Sn(2+), Mg(2+) and Ag(+). Inhibited by EDTA in vitro. Functionally, catalyzes the depolymerization of both polygalacturonate and pectins of methyl esterification degree from 22 to 89%, with an endo mode of action. In contrast to the majority of pectate lyases, displays high activity on highly methylated pectins. Is not able to cleave trigalacturonate. Does not degrade xylans and carboxymethylcellulose (CMC). This is Pectate lyase A (pelA) from Paenibacillus barcinonensis.